A 485-amino-acid chain; its full sequence is Skb1 localization factor 1 (485 aa).

The segment at 1 to 200 is sufficient for interaction with Skb1; that stretch reads MSSIIQNPIE…VDDSDLTPHT (200 aa). Disordered stretches follow at residues 117-230, 286-416, and 446-466; these read NAAN…MSRN, ETQH…LRRS, and TTQERKPVVKPDSIKTVKPEK. The segment covering 171–182 has biased composition (polar residues); that stretch reads SRSSRYSKTSDL. Residues 189–198 show a composition bias toward basic and acidic residues; sequence RFVDDSDLTP. 2 stretches are compositionally biased toward polar residues: residues 218 to 230 and 341 to 363; these read GRSSSPDQMMSRN and VGSSQPAEEFVGSSSSHGRQQDS. S222 is subject to Phosphoserine. The span at 371 to 393 shows a compositional bias: basic and acidic residues; that stretch reads SERSYRRVRDQYLSKPRLSDKNR. A compositionally biased stretch (polar residues) spans 394–416; the sequence is YSTFSEFPGQGTPSASQSNLRRS. The segment covering 447–464 has biased composition (basic and acidic residues); the sequence is TQERKPVVKPDSIKTVKP. The interval 451-485 is required and sufficient for plasma membrane anchoring; lysine-rich, may bind to anionic lipids in the plasma membrane; sequence KPVVKPDSIKTVKPEKKKSKGFFKKLMHKISHIFD. S458 is subject to Phosphoserine.

In terms of assembly, interacts with Skb1.

The protein resides in the cell membrane. Acts as a membrane anchor for Skb1 in forming plasma membrane microdomains. Promotes mitotic entry by sequestering mitotic inhibitor Skb1 from its regulatory targets Cdr1 and Wee1. The sequence is that of Skb1 localization factor 1 from Schizosaccharomyces pombe (strain 972 / ATCC 24843) (Fission yeast).